Reading from the N-terminus, the 891-residue chain is Shieldin complex subunit 2 (891 aa).

The tract at residues 1–61 is sufficient for interaction with SHLD3 and MAD2L2; the sequence is MSQGSQVHIF…AGDQEFKNLE (61 aa). Residues 1–542 are interaction with ASTE1; that stretch reads MSQGSQVHIF…TYVSTKHSYL (542 aa). Disordered regions lie at residues 184–222, 260–294, and 333–357; these read MSTG…KASD, NMEA…NEQS, and NEEN…WSCK. Over residues 192–222 the composition is skewed to basic and acidic residues; the sequence is PTGHRERQSQESFSDTRCEPQSEGAVRKASD. 2 stretches are compositionally biased toward polar residues: residues 260 to 271 and 342 to 354; these read NMEAEPTGSQGV and LCSS…NRSW. The mediates interaction with SHLD1 stretch occupies residues 695 to 866; that stretch reads KYSGVVLIKA…QQDFSLLDFC (172 aa).

It belongs to the SHLD2 family. In terms of assembly, component of the shieldin complex, consisting of SHLD1, SHLD2, SHLD3 and MAD2L2/REV7. Within the complex, SHLD2 forms a scaffold which interacts with a SHLD3-MAD2L2 subcomplex via its N-terminus, and with SHLD1 via its C-terminus. Interacts with TP53BP1. Interacts with RIF1. Interacts with ASTE1.

Its subcellular location is the chromosome. Its function is as follows. Component of the shieldin complex, which plays an important role in repair of DNA double-stranded breaks (DSBs). During G1 and S phase of the cell cycle, the complex functions downstream of TP53BP1 to promote non-homologous end joining (NHEJ) and suppress DNA end resection. Mediates various NHEJ-dependent processes including immunoglobulin class-switch recombination, and fusion of unprotected telomeres. In Mus musculus (Mouse), this protein is Shieldin complex subunit 2.